Consider the following 317-residue polypeptide: Putative HTH-type transcriptional regulatory protein NP_1320A (317 aa).

Residues 132–189 form the HTH cro/C1-type domain; it reads LSDIRSQEDMSLGKLANELGVSRRTVSKYEDGMSASVEVAAELEEIFDRKLASPVEVL. A DNA-binding region (H-T-H motif) is located at residues 143 to 162; it reads LGKLANELGVSRRTVSKYED.

This chain is Putative HTH-type transcriptional regulatory protein NP_1320A, found in Natronomonas pharaonis (strain ATCC 35678 / DSM 2160 / CIP 103997 / JCM 8858 / NBRC 14720 / NCIMB 2260 / Gabara) (Halobacterium pharaonis).